We begin with the raw amino-acid sequence, 663 residues long: Beta-galactosidase YesZ (663 aa).

Arginine 106 contributes to the substrate binding site. A Zn(2+)-binding site is contributed by cysteine 110. A substrate-binding site is contributed by asparagine 144. Glutamate 145 serves as the catalytic Proton donor. Residues cysteine 153, cysteine 155, and cysteine 158 each coordinate Zn(2+). The active-site Nucleophile is the glutamate 296. 345–348 contacts substrate; the sequence is EISH.

The protein belongs to the glycosyl hydrolase 42 family. Homotrimer.

It carries out the reaction Hydrolysis of terminal non-reducing beta-D-galactose residues in beta-D-galactosides.. May play a role in the degradation of rhamnogalacturonan derived from plant cell walls. This chain is Beta-galactosidase YesZ (yesZ), found in Bacillus subtilis (strain 168).